The following is a 158-amino-acid chain: SsrA-binding protein (158 aa).

Belongs to the SmpB family.

Its subcellular location is the cytoplasm. Its function is as follows. Required for rescue of stalled ribosomes mediated by trans-translation. Binds to transfer-messenger RNA (tmRNA), required for stable association of tmRNA with ribosomes. tmRNA and SmpB together mimic tRNA shape, replacing the anticodon stem-loop with SmpB. tmRNA is encoded by the ssrA gene; the 2 termini fold to resemble tRNA(Ala) and it encodes a 'tag peptide', a short internal open reading frame. During trans-translation Ala-aminoacylated tmRNA acts like a tRNA, entering the A-site of stalled ribosomes, displacing the stalled mRNA. The ribosome then switches to translate the ORF on the tmRNA; the nascent peptide is terminated with the 'tag peptide' encoded by the tmRNA and targeted for degradation. The ribosome is freed to recommence translation, which seems to be the essential function of trans-translation. The chain is SsrA-binding protein from Roseiflexus sp. (strain RS-1).